The primary structure comprises 134 residues: Small ribosomal subunit protein uS12 (134 aa).

The tract at residues Met1–Ser26 is disordered. A compositionally biased stretch (basic and acidic residues) spans Lys10–Lys20. A 3-methylthioaspartic acid modification is found at Asp89. A disordered region spans residues Asp103–Lys134. Basic residues predominate over residues Thr111–Lys123. Residues Pro124–Lys134 are compositionally biased toward low complexity.

This sequence belongs to the universal ribosomal protein uS12 family. In terms of assembly, part of the 30S ribosomal subunit. Contacts proteins S8 and S17. May interact with IF1 in the 30S initiation complex.

Its function is as follows. With S4 and S5 plays an important role in translational accuracy. Interacts with and stabilizes bases of the 16S rRNA that are involved in tRNA selection in the A site and with the mRNA backbone. Located at the interface of the 30S and 50S subunits, it traverses the body of the 30S subunit contacting proteins on the other side and probably holding the rRNA structure together. The combined cluster of proteins S8, S12 and S17 appears to hold together the shoulder and platform of the 30S subunit. The polypeptide is Small ribosomal subunit protein uS12 (Porphyromonas gingivalis (strain ATCC BAA-308 / W83)).